The chain runs to 285 residues: Neuralized-like protein 2 (285 aa).

Residues 1 to 20 (MAAASEPVDSGALWGLERPE) are disordered. In terms of domain architecture, NHR spans 23–244 (PTRFHRVHGA…STKSVRLVQL (222 aa)). Residues 250–285 (SLQTLCRLVIQRSMVHRLAIDGLHLPKELKDFCKYE) enclose the SOCS box domain.

Probable component the ECS(NEURL2) E3 ubiquitin-protein ligase complex consisting of ELOB/Elongin B, ELOC/Elongin C, CUL5, RBX1 and NEURL2. Interacts with CTNNB1. In terms of tissue distribution, expressed specifically in skeletal and cardiac muscles.

The protein resides in the cytoplasm. Its pathway is protein modification; protein ubiquitination. Functionally, plays an important role in the process of myofiber differentiation and maturation. Probable substrate-recognition component of a SCF-like ECS (Elongin BC-CUL2/5-SOCS-box protein) E3 ubiquitin-protein ligase complex, which mediates the ubiquitination of proteins. Probably contributes to catalysis through recognition and positioning of the substrate and the ubiquitin-conjugating enzyme. During myogenesis, controls the ubiquitination and degradation of the specific pool of CTNNB1/beta-catenin located at the sarcolemma. The polypeptide is Neuralized-like protein 2 (NEURL2) (Homo sapiens (Human)).